A 196-amino-acid chain; its full sequence is Small ribosomal subunit protein uS4c (196 aa).

Residues 16-40 (GALPGLTRKTPKSGSNLKKKFHSGK) form a disordered region. In terms of domain architecture, S4 RNA-binding spans 89–152 (MRLDNTLFRL…RSKDLVRNSI (64 aa)).

Belongs to the universal ribosomal protein uS4 family. In terms of assembly, part of the 30S ribosomal subunit. Contacts protein S5. The interaction surface between S4 and S5 is involved in control of translational fidelity.

It is found in the plastid. The protein resides in the chloroplast. One of the primary rRNA binding proteins, it binds directly to 16S rRNA where it nucleates assembly of the body of the 30S subunit. Its function is as follows. With S5 and S12 plays an important role in translational accuracy. In Anthoxanthum odoratum (Sweet vernal grass), this protein is Small ribosomal subunit protein uS4c (rps4).